A 146-amino-acid polypeptide reads, in one-letter code: Hemoglobin subunit beta-1 (146 aa).

Residues 2–146 (HWTAEEKHLL…VAHALARRYH (145 aa)) enclose the Globin domain. Residues H63 and H92 each contribute to the heme b site.

Belongs to the globin family. As to quaternary structure, there are three forms of hemoglobin in Sphenodon: A, A' and D. Hb A is a tetramer of two alpha-A and two beta-1, Hb A' is a tetramer of two alpha-a and two beta-2, Hb D is a tetramer of two alpha-D and two beta-2.

Functionally, involved in oxygen transport from the lung to the various peripheral tissues. The chain is Hemoglobin subunit beta-1 (HBB1) from Sphenodon punctatus (Tuatara).